The chain runs to 993 residues: UPF0182 protein Sare_4110 (993 aa).

7 consecutive transmembrane segments (helical) span residues 18 to 38 (IGVLVGVFVLFTLLGWGVQAW), 61 to 81 (LLLFVTVGLAMAVVVGGNLWL), 110 to 130 (LGTWFAVVSVVVGLFAGLSAQ), 171 to 191 (GVAFTAVVLALIGALAVHYVF), 209 to 229 (AHLSALVAVFVLLKAVAYVLD), 260 to 280 (ILAYISVVVAIAVLVFSNAWM), and 283 to 303 (LVWPGISLALLGVSAVAIGGI). Disordered regions lie at residues 892-937 (QGEK…ADAA) and 974-993 (EQAAGPGSAATPTGSPSPGG). Pro residues predominate over residues 900-929 (STPPPSGETPAPTPTPTPTPSSPSVTPPPV). Residues 976 to 993 (AAGPGSAATPTGSPSPGG) show a composition bias toward low complexity.

It belongs to the UPF0182 family.

The protein localises to the cell membrane. In Salinispora arenicola (strain CNS-205), this protein is UPF0182 protein Sare_4110.